Here is a 90-residue protein sequence, read N- to C-terminus: Phosphocarrier protein HPr (90 aa).

An HPr domain is found at 1–89 (MPAREITIIN…ELINNFFDEG (89 aa)). The active-site Pros-phosphohistidine intermediate is the histidine 15.

Belongs to the HPr family.

It is found in the cytoplasm. In terms of biological role, general (non sugar-specific) component of the phosphoenolpyruvate-dependent sugar phosphotransferase system (sugar PTS). This major carbohydrate active-transport system catalyzes the phosphorylation of incoming sugar substrates concomitantly with their translocation across the cell membrane. The phosphoryl group from phosphoenolpyruvate (PEP) is transferred to the phosphoryl carrier protein HPr by enzyme I. Phospho-HPr then transfers it to the PTS EIIA domain. The protein is Phosphocarrier protein HPr (ptsH) of Pseudomonas putida (Arthrobacter siderocapsulatus).